A 459-amino-acid chain; its full sequence is ATP-dependent 6-phosphofructokinase (459 aa).

ATP is bound by residues Gly89, 154–155 (RG), and 179–182 (GDGG). Asp180 serves as a coordination point for Mg(2+). Substrate contacts are provided by residues 208–210 (TID), 253–255 (MGR), Glu309, and 368–371 (YAIR). Asp210 acts as the Proton acceptor in catalysis.

The protein belongs to the phosphofructokinase type A (PFKA) family. PPi-dependent PFK group II subfamily. Atypical ATP-dependent clade 'X' sub-subfamily. As to quaternary structure, homodimer. It depends on Mg(2+) as a cofactor.

Its subcellular location is the cytoplasm. It catalyses the reaction beta-D-fructose 6-phosphate + ATP = beta-D-fructose 1,6-bisphosphate + ADP + H(+). Its pathway is carbohydrate degradation; glycolysis; D-glyceraldehyde 3-phosphate and glycerone phosphate from D-glucose: step 3/4. Its activity is regulated as follows. AMP causes 20-40% inhibition and diphosphate causes 20-50% inhibition. ADP, citrate, PEP and FBP have no effect. Its function is as follows. Catalyzes the phosphorylation of D-fructose 6-phosphate to fructose 1,6-bisphosphate by ATP, the first committing step of glycolysis. The protein is ATP-dependent 6-phosphofructokinase of Amycolatopsis methanolica.